Consider the following 434-residue polypeptide: Adenylosuccinate synthetase (434 aa).

GTP is bound by residues 25–31 (GDEGKGK) and 53–55 (GHT). Asp26 acts as the Proton acceptor in catalysis. Residues Asp26 and Gly53 each contribute to the Mg(2+) site. Residues 26-29 (DEGK), 51-54 (NAGH), Thr142, Arg156, Asn233, Thr248, and Arg312 contribute to the IMP site. His54 serves as the catalytic Proton donor. 308 to 314 (VTTGRKR) contributes to the substrate binding site. GTP is bound by residues Arg314, 340 to 342 (KLD), and 422 to 424 (GVG).

Belongs to the adenylosuccinate synthetase family. Homodimer. Mg(2+) serves as cofactor.

It is found in the cytoplasm. The catalysed reaction is IMP + L-aspartate + GTP = N(6)-(1,2-dicarboxyethyl)-AMP + GDP + phosphate + 2 H(+). It functions in the pathway purine metabolism; AMP biosynthesis via de novo pathway; AMP from IMP: step 1/2. Its activity is regulated as follows. Competitively Inhibited by GMP. Allosterically inhibited by AMP. Plays an important role in the de novo pathway and in the salvage pathway of purine nucleotide biosynthesis. Catalyzes the first committed step in the biosynthesis of AMP from IMP. In Schizosaccharomyces pombe (strain 972 / ATCC 24843) (Fission yeast), this protein is Adenylosuccinate synthetase (ade2).